We begin with the raw amino-acid sequence, 233 residues long: MADS-box protein CMB1 (233 aa).

In terms of domain architecture, MADS-box spans 3–58 (RGRVELKRIENKINRQVTFAKRRNGLLKKAYELSVLCDAEVALIVFSNRGKLYEFC). A K-box domain is found at 87 to 177 (TESSYQEYLK…KTKLEESCAS (91 aa)).

It localises to the nucleus. The sequence is that of MADS-box protein CMB1 (CMB1) from Dianthus caryophyllus (Carnation).